The sequence spans 337 residues: Glyceraldehyde-3-phosphate dehydrogenase 2 (337 aa).

Residues Arg-11–Ile-12, Asp-35, Arg-80, and Thr-122 contribute to the NADP(+) site. Residues Ser-153–Thr-155, Thr-184, Arg-199, Thr-212–Gly-213, and Arg-235 each bind D-glyceraldehyde 3-phosphate. Cys-154 acts as the Nucleophile in catalysis. NADP(+) is bound at residue Asn-317.

In terms of assembly, homotetramer.

Its subcellular location is the cytoplasm. The catalysed reaction is D-glyceraldehyde 3-phosphate + phosphate + NADP(+) = (2R)-3-phospho-glyceroyl phosphate + NADPH + H(+). It carries out the reaction D-glyceraldehyde 3-phosphate + phosphate + NAD(+) = (2R)-3-phospho-glyceroyl phosphate + NADH + H(+). It functions in the pathway carbohydrate biosynthesis; Calvin cycle. Its function is as follows. Gap2 has a major role in carbon fixation as a component of the Calvin cycle. Catalyzes the oxidative phosphorylation of glyceraldehyde 3-phosphate (G3P) to 1,3-bisphosphoglycerate (BPG) using the cofactor NADP. The first reaction step involves the formation of a hemiacetal intermediate between G3P and a cysteine residue, and this hemiacetal intermediate is then oxidized to a thioester, with concomitant reduction of NADP to NADPH. The reduced NADPH is then exchanged with the second NAD, and the thioester is attacked by a nucleophilic inorganic phosphate to produce BPG. The protein is Glyceraldehyde-3-phosphate dehydrogenase 2 (gap2) of Nostoc sp. (strain PCC 7120 / SAG 25.82 / UTEX 2576).